Consider the following 138-residue polypeptide: ER-derived vesicles protein ERV14 (138 aa).

The Cytoplasmic portion of the chain corresponds to 2–6; that stretch reads GAWLF. A helical transmembrane segment spans residues 7–27; the sequence is ILAVVVNCINLFGQVHFTILY. Topologically, residues 28 to 52 are extracellular; it reads ADLEADYINPIELCSKVNKLITPEA. Residues 53-73 form a helical membrane-spanning segment; sequence ALHGALSLLFLLNGYWFVFLL. The Cytoplasmic portion of the chain corresponds to 74 to 111; that stretch reads NLPVLAYNLNKIYNKVQLLDATEIFRTLGKHKRESFLK. The helical transmembrane segment at 112-132 threads the bilayer; that stretch reads LGFHLLMFFFYLYRMIMALIA. Residues 133 to 138 are Extracellular-facing; it reads ESGDDF.

This sequence belongs to the cornichon family.

It localises to the endoplasmic reticulum membrane. The protein resides in the golgi apparatus membrane. Functionally, could regulate export of the bud site and axial growth sites selection protein AXL2 and possibly other secretory proteins from the endoplasmic reticulum in COPII-coated vesicles. Seems to be required for axial budding pattern in haploid cells. This is ER-derived vesicles protein ERV14 (ERV14) from Saccharomyces cerevisiae (strain ATCC 204508 / S288c) (Baker's yeast).